A 348-amino-acid chain; its full sequence is Nicotinate-nucleotide--dimethylbenzimidazole phosphoribosyltransferase (348 aa).

E316 functions as the Proton acceptor in the catalytic mechanism.

This sequence belongs to the CobT family.

It catalyses the reaction 5,6-dimethylbenzimidazole + nicotinate beta-D-ribonucleotide = alpha-ribazole 5'-phosphate + nicotinate + H(+). It participates in nucleoside biosynthesis; alpha-ribazole biosynthesis; alpha-ribazole from 5,6-dimethylbenzimidazole: step 1/2. Catalyzes the synthesis of alpha-ribazole-5'-phosphate from nicotinate mononucleotide (NAMN) and 5,6-dimethylbenzimidazole (DMB). This Xanthomonas campestris pv. campestris (strain 8004) protein is Nicotinate-nucleotide--dimethylbenzimidazole phosphoribosyltransferase.